A 904-amino-acid polypeptide reads, in one-letter code: Translation initiation factor IF-2 (904 aa).

The tract at residues 239 to 316 (QAATQAKTSE…DDGQGSFQAP (78 aa)) is disordered. The span at 248-278 (EGAEKGTLHKKPETPGKKGDKGGRAADDGKK) shows a compositional bias: basic and acidic residues. Residues 404–571 (HRAPVVTVMG…QVLLQAEILE (168 aa)) enclose the tr-type G domain. Residues 413–420 (GHVDHGKT) are G1. 413–420 (GHVDHGKT) is a GTP binding site. Residues 438–442 (GITQH) form a G2 region. The tract at residues 459-462 (DTPG) is G3. GTP is bound by residues 459 to 463 (DTPGH) and 513 to 516 (NKID). The tract at residues 513 to 516 (NKID) is G4. Positions 549–551 (SAK) are G5.

Belongs to the TRAFAC class translation factor GTPase superfamily. Classic translation factor GTPase family. IF-2 subfamily.

It is found in the cytoplasm. Its function is as follows. One of the essential components for the initiation of protein synthesis. Protects formylmethionyl-tRNA from spontaneous hydrolysis and promotes its binding to the 30S ribosomal subunits. Also involved in the hydrolysis of GTP during the formation of the 70S ribosomal complex. In Dechloromonas aromatica (strain RCB), this protein is Translation initiation factor IF-2.